We begin with the raw amino-acid sequence, 375 residues long: Queuine tRNA-ribosyltransferase (375 aa).

Residue Asp-90 is the Proton acceptor of the active site. Residues 90–94 (DSGGF), Asp-144, Gln-190, and Gly-217 contribute to the substrate site. The interval 248–254 (GIGTPHY) is RNA binding. Catalysis depends on Asp-267, which acts as the Nucleophile. Residues 272-276 (ARITR) form an RNA binding; important for wobble base 34 recognition region. 4 residues coordinate Zn(2+): Cys-305, Cys-307, Cys-310, and His-336.

The protein belongs to the queuine tRNA-ribosyltransferase family. In terms of assembly, homodimer. Within each dimer, one monomer is responsible for RNA recognition and catalysis, while the other monomer binds to the replacement base PreQ1. It depends on Zn(2+) as a cofactor.

It catalyses the reaction 7-aminomethyl-7-carbaguanine + guanosine(34) in tRNA = 7-aminomethyl-7-carbaguanosine(34) in tRNA + guanine. It functions in the pathway tRNA modification; tRNA-queuosine biosynthesis. In terms of biological role, catalyzes the base-exchange of a guanine (G) residue with the queuine precursor 7-aminomethyl-7-deazaguanine (PreQ1) at position 34 (anticodon wobble position) in tRNAs with GU(N) anticodons (tRNA-Asp, -Asn, -His and -Tyr). Catalysis occurs through a double-displacement mechanism. The nucleophile active site attacks the C1' of nucleotide 34 to detach the guanine base from the RNA, forming a covalent enzyme-RNA intermediate. The proton acceptor active site deprotonates the incoming PreQ1, allowing a nucleophilic attack on the C1' of the ribose to form the product. After dissociation, two additional enzymatic reactions on the tRNA convert PreQ1 to queuine (Q), resulting in the hypermodified nucleoside queuosine (7-(((4,5-cis-dihydroxy-2-cyclopenten-1-yl)amino)methyl)-7-deazaguanosine). This Borreliella burgdorferi (strain ATCC 35210 / DSM 4680 / CIP 102532 / B31) (Borrelia burgdorferi) protein is Queuine tRNA-ribosyltransferase.